A 284-amino-acid chain; its full sequence is NADH-cytochrome b5 reductase 1 (284 aa).

The helical transmembrane segment at 7 to 27 (KLVVVIVIVVVPLLFKFIIGP) threads the bilayer. An FAD-binding FR-type domain is found at 38–142 (NDFQSFPLVE…KGPRGNYHYE (105 aa)). FAD is bound by residues 122–137 (GELKIGDSIQIKGPRG) and 148–180 (HLGMIAGGTGIAPMYQIMKAIAMDPHDTTKVSL).

This sequence belongs to the flavoprotein pyridine nucleotide cytochrome reductase family. As to quaternary structure, monomer. Component of the 2-(3-amino-3-carboxypropyl)histidine synthase complex composed of DPH1, DPH2, KTI11/DPH3 and a NADH-dependent reductase, predominantly CBR1. Interacts with KTI11/DPH3. Interacts with STE20. Requires FAD as cofactor.

It localises to the mitochondrion outer membrane. It catalyses the reaction 2 Fe(III)-[cytochrome b5] + NADH = 2 Fe(II)-[cytochrome b5] + NAD(+) + H(+). The enzyme catalyses 2 Fe(3+)-[Dph3] + NADH = 2 Fe(2+)-[Dph3] + NAD(+) + H(+). The protein operates within protein modification; peptidyl-diphthamide biosynthesis. With respect to regulation, competitively inhibited by NAD(+). Inhibited by mercurials such as p-chloromercuribenzoate (PCMB) and HgCl(2). Enzymatic activity increases under anaerobic conditions. Functionally, NADH-dependent reductase for KTI11/DPH3 and cytochrome b5. Required for the first step of diphthamide biosynthesis, a post-translational modification of histidine which occurs in elongation factor 2. DPH1 and DPH2 transfer a 3-amino-3-carboxypropyl (ACP) group from S-adenosyl-L-methionine (SAM) to a histidine residue, the reaction is assisted by a reduction system comprising KTI11/DPH3 and a NADH-dependent reductase, predominantly CBR1. By reducing KTI11/DPH3, also involved in the formation of the tRNA wobble base modification mcm5s 2U (5-methoxycarbonylmethyl-2-thiouridine), mediated by the elongator complex. The cytochrome b5/NADH cytochrome b5 reductase electron transfer system supports the catalytic activity of several sterol biosynthetic enzymes. Plays a role in bud morphology. In Saccharomyces cerevisiae (strain ATCC 204508 / S288c) (Baker's yeast), this protein is NADH-cytochrome b5 reductase 1 (CBR1).